A 429-amino-acid polypeptide reads, in one-letter code: Zinc finger protein 385C (429 aa).

A Matrin-type 1 zinc finger spans residues 77–107 (ISCNICHLRFNSANQAEAHYKGHRHARKLKA). 3 disordered regions span residues 109-224 (EAAK…GRGE), 258-295 (GHQG…GPSP), and 311-340 (QLKQ…NKLQ). Over residues 125–146 (TVVSSASPPASGSPGTPQSKGP) the composition is skewed to low complexity. Residues 147–162 (ASPPLGPSLQLPPTPD) show a composition bias toward pro residues. Over residues 181–193 (CDAAASSSSSSCP) the composition is skewed to low complexity. The Matrin-type 2 zinc-finger motif lies at 225–259 (KGRLYCPTCKVTVNSASQLQAHNTGAKHRWMVEGH). The segment covering 262-284 (APRRGRGRPVSRGGTGHKTKRVI) has biased composition (basic residues). Residues 297 to 327 (FHCALCQLHVNSETQLKQHMSSRRHKDRLAG) form a Matrin-type 3 zinc finger.

It localises to the nucleus. The sequence is that of Zinc finger protein 385C from Mus musculus (Mouse).